A 92-amino-acid polypeptide reads, in one-letter code: Protamine-2 (92 aa).

The interval methionine 1–arginine 76 is disordered. Over residues arginine 7–glutamine 20 the composition is skewed to low complexity. Residues serine 8 and serine 10 each carry the phosphoserine modification. A compositionally biased stretch (basic and acidic residues) spans arginine 21–aspartate 36. Basic residues predominate over residues arginine 42 to arginine 76.

Belongs to the protamine P2 family. In terms of assembly, interacts with TDRP. Post-translationally, proteolytic processing into mature chains is required for histone eviction during spermatogenesis. Transition proteins (TNP1 and TNP2) are required for processing. Testis.

The protein localises to the nucleus. Its subcellular location is the chromosome. Functionally, protamines substitute for histones in the chromatin of sperm during the haploid phase of spermatogenesis. They compact sperm DNA into a highly condensed, stable and inactive complex. This is Protamine-2 (PRM2) from Sus scrofa (Pig).